Reading from the N-terminus, the 456-residue chain is Exodeoxyribonuclease 7 large subunit (456 aa).

This sequence belongs to the XseA family. As to quaternary structure, heterooligomer composed of large and small subunits.

It is found in the cytoplasm. The enzyme catalyses Exonucleolytic cleavage in either 5'- to 3'- or 3'- to 5'-direction to yield nucleoside 5'-phosphates.. In terms of biological role, bidirectionally degrades single-stranded DNA into large acid-insoluble oligonucleotides, which are then degraded further into small acid-soluble oligonucleotides. This Lactobacillus delbrueckii subsp. bulgaricus (strain ATCC 11842 / DSM 20081 / BCRC 10696 / JCM 1002 / NBRC 13953 / NCIMB 11778 / NCTC 12712 / WDCM 00102 / Lb 14) protein is Exodeoxyribonuclease 7 large subunit.